The following is a 359-amino-acid chain: UDP-N-acetylglucosamine--N-acetylmuramyl-(pentapeptide) pyrophosphoryl-undecaprenol N-acetylglucosamine transferase (359 aa).

UDP-N-acetyl-alpha-D-glucosamine is bound by residues 15–17 (TGG), asparagine 127, arginine 166, serine 191, isoleucine 245, 264–269 (ALTVSE), and glutamine 290.

This sequence belongs to the glycosyltransferase 28 family. MurG subfamily.

Its subcellular location is the cell inner membrane. It catalyses the reaction di-trans,octa-cis-undecaprenyl diphospho-N-acetyl-alpha-D-muramoyl-L-alanyl-D-glutamyl-meso-2,6-diaminopimeloyl-D-alanyl-D-alanine + UDP-N-acetyl-alpha-D-glucosamine = di-trans,octa-cis-undecaprenyl diphospho-[N-acetyl-alpha-D-glucosaminyl-(1-&gt;4)]-N-acetyl-alpha-D-muramoyl-L-alanyl-D-glutamyl-meso-2,6-diaminopimeloyl-D-alanyl-D-alanine + UDP + H(+). It functions in the pathway cell wall biogenesis; peptidoglycan biosynthesis. Its function is as follows. Cell wall formation. Catalyzes the transfer of a GlcNAc subunit on undecaprenyl-pyrophosphoryl-MurNAc-pentapeptide (lipid intermediate I) to form undecaprenyl-pyrophosphoryl-MurNAc-(pentapeptide)GlcNAc (lipid intermediate II). This chain is UDP-N-acetylglucosamine--N-acetylmuramyl-(pentapeptide) pyrophosphoryl-undecaprenol N-acetylglucosamine transferase, found in Pseudomonas putida (strain GB-1).